We begin with the raw amino-acid sequence, 156 residues long: UPF0266 membrane protein NT01EI_1718 (156 aa).

Helical transmembrane passes span 6-26, 46-63, and 67-87; these read IALL…EAIM, DSLI…RNIS, and APFT…IFYL.

This sequence belongs to the UPF0266 family.

The protein localises to the cell inner membrane. The polypeptide is UPF0266 membrane protein NT01EI_1718 (Edwardsiella ictaluri (strain 93-146)).